Reading from the N-terminus, the 275-residue chain is N-acetyltransferase YodP (275 aa).

The 147-residue stretch at 125-271 folds into the N-acetyltransferase domain; sequence FTMRKAETND…AEGLENMNIW (147 aa).

The protein belongs to the acetyltransferase family.

It catalyses the reaction (3S)-3,6-diaminohexanoate + acetyl-CoA = (3S)-6-acetamido-3-aminohexanoate + CoA + H(+). In vitro, is able to catalyze the acetylation of beta-lysine to N6-acetyl-beta-lysine, an archaeal osmolyte produced by methanogenic archaea. Its physiological function has not yet been elucidated. The chain is N-acetyltransferase YodP (yodP) from Bacillus subtilis (strain 168).